The sequence spans 755 residues: MSASPLLDNQCDHLPTKMVDLTMVDKADELDRRVSDAFLEREASRGRRITQISTECSAGLACKRLADGRFPEISAGGKVAVLSAYIYIGKEILGRILESKPWARATVSGLVAIDLAPFCMDFSEAQLIQALFLLSGKRCAPIDLSHFVAISISKTAGFRTLPMPLYENGTMKCVTGFTITLEGAVPFDMVAYGRNLMLKGSAGSFPTIDLLYDYRPFFDQCSDSGRIGFFPEDVPKPKVAVIGAGISGLVVANELLHAGVDDVTIYEASDRVGGKLWSHAFRDAPSVVAEMGAMRFPPAAFCLFFFLERYGLSSMRPFPNPGTVDTYLVYQGVQYMWKAGQLPPKLFHRVYNGWRAFLKDGFYERDIVLASPVAITQALKSGDIRWAHDSWQIWLNRFGRESFSSGIERIFLGTHPPGGETWSFPHDWDLFKLMGIGSGGFGPVFESGFIEILRLVINGYEENQRMCPEGISELPRRIASEVVNGVSVSQRICHVQVRAIQKEKTKIKIRLKSGISELYDKVVVTSGLANIQLRHCLTCDTNIFQAPVNQAVDNSHMTGSSKLFLMTERKFWLDHILPSCVLMDGIAKAVYCLDYEPQDPNGKGLVLISYTWEDDSHKLLAVPDKKERLCLLRDAISRSFPAFAQHLFPACADYDQNVIQHDWLTDENAGGAFKLNRRGEDFYSEELFFQALDTANDTGVYLAGCSCSFTGGWVEGANRTPCNAVCAIIHNCGGILAKGNPLEHSWKRYNYRTRN.

FMN contacts are provided by Ser247, Glu267, Lys275, and Arg295. A substrate-binding site is contributed by Arg295.

Belongs to the tryptophan 2-monooxygenase family. Requires FMN as cofactor.

The enzyme catalyses L-tryptophan + O2 = indole-3-acetamide + CO2 + H2O. It functions in the pathway plant hormone metabolism; auxin biosynthesis. This Agrobacterium tumefaciens (strain Ach5) protein is Tryptophan 2-monooxygenase (tms1).